The sequence spans 625 residues: Vacuolar-sorting receptor 7 (625 aa).

A signal peptide spans 1 to 26 (MGLVNGRASLTFLLAALTIIAMVVEA). Residues 27 to 564 (RFVVEKESIS…CIERYGSKTA (538 aa)) are Lumenal-facing. One can recognise a PA domain in the interval 58 to 166 (DYGGFLIGSV…SFGDDLRQGF (109 aa)). N-linked (GlcNAc...) asparagine glycosylation is found at N292, N400, and N432. EGF-like domains are found at residues 414-464 (ETNE…TSCT) and 467-513 (GPAR…LTCE). Cystine bridges form between C418–C436, C425–C445, C447–C463, C471–C491, C478–C499, C501–C512, and C542–C555. An EGF-like 3; calcium-binding domain is found at 514-556 (DINECKERSVCQCSGCRCKNSWGGYKCSCSGDRLYINDQDTCI). The helical transmembrane segment at 565 to 585 (WWLTFLILAIVAVAGLAGYIF) threads the bilayer. Topologically, residues 586 to 625 (YKYRFRSYMDSEIMTIMSQYMPLESQRAREVPSEAEPFTL) are cytoplasmic. Positions 605–608 (YMPL) match the Tyrosine-based internalization motif motif.

Belongs to the VSR (BP-80) family. As to expression, expressed at low levels in seedlings, roots, young leaves, flowers and siliques.

It is found in the golgi apparatus membrane. Its function is as follows. Vacuolar-sorting receptor (VSR) involved in clathrin-coated vesicles sorting from Golgi apparatus to vacuoles. This Arabidopsis thaliana (Mouse-ear cress) protein is Vacuolar-sorting receptor 7 (VSR7).